Consider the following 549-residue polypeptide: Cytoplasmic trehalase (549 aa).

Substrate contacts are provided by residues R168, 175-176 (WD), N212, 221-223 (RSQ), 292-294 (RDE), and G324. Active-site proton donor/acceptor residues include D326 and E509. Position 525 (E525) interacts with substrate.

This sequence belongs to the glycosyl hydrolase 37 family. As to quaternary structure, monomer.

It is found in the cytoplasm. It catalyses the reaction alpha,alpha-trehalose + H2O = alpha-D-glucose + beta-D-glucose. It functions in the pathway glycan degradation; trehalose degradation; D-glucose from alpha,alpha-trehalose: step 1/1. Its function is as follows. Hydrolyzes trehalose to glucose. Could be involved, in cells returning to low osmolarity conditions, in the utilization of the accumulated cytoplasmic trehalose, which was synthesized in response to high osmolarity. This Escherichia coli O127:H6 (strain E2348/69 / EPEC) protein is Cytoplasmic trehalase.